The sequence spans 376 residues: 2-aminoethylphosphonate--pyruvate transaminase 2 (376 aa).

Lysine 194 bears the N6-(pyridoxal phosphate)lysine mark.

This sequence belongs to the class-V pyridoxal-phosphate-dependent aminotransferase family. PhnW subfamily. In terms of assembly, homodimer. Requires pyridoxal 5'-phosphate as cofactor.

It catalyses the reaction (2-aminoethyl)phosphonate + pyruvate = phosphonoacetaldehyde + L-alanine. Functionally, involved in phosphonate degradation. This is 2-aminoethylphosphonate--pyruvate transaminase 2 from Burkholderia lata (strain ATCC 17760 / DSM 23089 / LMG 22485 / NCIMB 9086 / R18194 / 383).